A 255-amino-acid polypeptide reads, in one-letter code: MVWKWMPLLLLLVCVATMCSAQDRTDLLNVCMDAKHHKTKPGPEDKLHDQCSPWKKNACCTASTSQELHKDTSRLYNFNWDHCGKMEPACKRHFIQDTCLYECSPNLGPWIQQVNQSWRKERFLDVPLCKEDCQRWWEDCHTSHTCKSNWHRGWDWTSGVNKCPAGALCRTFESYFPTPAALCEGLWSHSYKVSNYSRGSGRCIQMWFDSAQGNPNEEVARFYAAAMHVNAGEMLHGTGGLLLSLALMLQLWLLG.

The first 16 residues, 1-16 (MVWKWMPLLLLLVCVA), serve as a signal peptide directing secretion. Cystine bridges form between Cys31/Cys59, Cys51/Cys99, Cys60/Cys103, Cys83/Cys169, Cys90/Cys140, Cys129/Cys203, Cys133/Cys183, and Cys146/Cys163. The folate site is built by Asp97 and Tyr101. N-linked (GlcNAc...) asparagine glycosylation occurs at Asn115. Folate-binding positions include 118-122 (WRKER), 151-156 (HRGWDW), and Ser190. Asn195 carries N-linked (GlcNAc...) asparagine glycosylation. Asn230 is lipidated: GPI-anchor amidated asparagine. The propeptide at 231–255 (AGEMLHGTGGLLLSLALMLQLWLLG) is removed in mature form.

It belongs to the folate receptor family. Post-translationally, N-glycosylated. As to expression, expressed in placenta and hematopoietic cells. Expression is increased in malignant tissues.

The protein localises to the cell membrane. Its subcellular location is the secreted. Its function is as follows. Binds to folate and reduced folic acid derivatives and mediates delivery of 5-methyltetrahydrofolate and folate analogs into the interior of cells. Has high affinity for folate and folic acid analogs at neutral pH. Exposure to slightly acidic pH after receptor endocytosis triggers a conformation change that strongly reduces its affinity for folates and mediates their release. The protein is Folate receptor beta (FOLR2) of Homo sapiens (Human).